A 279-amino-acid chain; its full sequence is Tryptophan synthase alpha chain (279 aa).

Residues Glu-50 and Asp-61 each act as proton acceptor in the active site.

It belongs to the TrpA family. As to quaternary structure, tetramer of two alpha and two beta chains.

The catalysed reaction is (1S,2R)-1-C-(indol-3-yl)glycerol 3-phosphate + L-serine = D-glyceraldehyde 3-phosphate + L-tryptophan + H2O. The protein operates within amino-acid biosynthesis; L-tryptophan biosynthesis; L-tryptophan from chorismate: step 5/5. Its function is as follows. The alpha subunit is responsible for the aldol cleavage of indoleglycerol phosphate to indole and glyceraldehyde 3-phosphate. The chain is Tryptophan synthase alpha chain from Methylobacterium radiotolerans (strain ATCC 27329 / DSM 1819 / JCM 2831 / NBRC 15690 / NCIMB 10815 / 0-1).